The primary structure comprises 1024 residues: Eukaryotic translation initiation factor 3 subunit A (1024 aa).

Residues Val-331 to Phe-508 form the PCI domain. 2 coiled-coil regions span residues Ala-575–Ala-717 and Lys-777–Arg-889. Composition is skewed to basic and acidic residues over residues Lys-797–Ala-866 and Asp-873–Arg-886. Disordered regions lie at residues Lys-797–Arg-973 and Ala-1001–Ala-1024. Composition is skewed to low complexity over residues Ala-890–Ala-906 and Lys-946–Ala-971.

The protein belongs to the eIF-3 subunit A family. Component of the eukaryotic translation initiation factor 3 (eIF-3) complex.

It localises to the cytoplasm. Its function is as follows. RNA-binding component of the eukaryotic translation initiation factor 3 (eIF-3) complex, which is involved in protein synthesis of a specialized repertoire of mRNAs and, together with other initiation factors, stimulates binding of mRNA and methionyl-tRNAi to the 40S ribosome. The eIF-3 complex specifically targets and initiates translation of a subset of mRNAs involved in cell proliferation. The chain is Eukaryotic translation initiation factor 3 subunit A from Mycosarcoma maydis (Corn smut fungus).